Consider the following 376-residue polypeptide: 5-amino-6-(D-ribitylamino)uracil--L-tyrosine 4-hydroxyphenyl transferase 1 (376 aa).

Residues 50 to 275 form the Radical SAM core domain; that stretch reads VTYVVNRNIN…PGLEDLKVYA (226 aa). The [4Fe-4S] cluster site is built by Cys-64, Cys-68, and Cys-71.

It belongs to the radical SAM superfamily. CofH family. Consists of two subunits, CofG and CofH. Requires [4Fe-4S] cluster as cofactor.

It catalyses the reaction 5-amino-6-(D-ribitylamino)uracil + L-tyrosine + S-adenosyl-L-methionine = 5-amino-5-(4-hydroxybenzyl)-6-(D-ribitylimino)-5,6-dihydrouracil + 2-iminoacetate + 5'-deoxyadenosine + L-methionine + H(+). The protein operates within cofactor biosynthesis; coenzyme F0 biosynthesis. Catalyzes the radical-mediated synthesis of 5-amino-5-(4-hydroxybenzyl)-6-(D-ribitylimino)-5,6-dihydrouracil from 5-amino-6-(D-ribitylamino)uracil and L-tyrosine. This chain is 5-amino-6-(D-ribitylamino)uracil--L-tyrosine 4-hydroxyphenyl transferase 1, found in Methanosarcina mazei (strain ATCC BAA-159 / DSM 3647 / Goe1 / Go1 / JCM 11833 / OCM 88) (Methanosarcina frisia).